An 89-amino-acid chain; its full sequence is Cell division topological specificity factor (89 aa).

This sequence belongs to the MinE family.

Functionally, prevents the cell division inhibition by proteins MinC and MinD at internal division sites while permitting inhibition at polar sites. This ensures cell division at the proper site by restricting the formation of a division septum at the midpoint of the long axis of the cell. This chain is Cell division topological specificity factor, found in Klebsiella pneumoniae (strain 342).